Consider the following 333-residue polypeptide: MITMALNFYKYYSRQIKYALHFNILNNSIIDAENKYINFQKPLKNVIVSDSMFIDTAYLLKIKKMIKSIKGVFWADFVLKKYYPLYSDYLKGKISNVGTDGKINYGEILNINPDMIFLIDWNIFNPLSKWLDKNNIPYTKTGNYKEPKFLGKMEWIKFYASFYNKYKKAEKVFNKIIEEKRRILKSLNSRSIKYKPVVAFFGYHKNQPYIYGKSHYIPNWIREIKGNYLFENVEGTNYHYIDRKIFNSRAKYADVCILDTMGEDIDIKELLKNNPHFLKFRAYKNKRFYITTKDYLKFETLKCSEVMEEYVKIIHPKIYQNGDNDLKYFIKVV.

In terms of domain architecture, Fe/B12 periplasmic-binding spans 45-318 (NVIVSDSMFI…EYVKIIHPKI (274 aa)).

This is an uncharacterized protein from Methanocaldococcus jannaschii (strain ATCC 43067 / DSM 2661 / JAL-1 / JCM 10045 / NBRC 100440) (Methanococcus jannaschii).